Reading from the N-terminus, the 393-residue chain is Major outer membrane porin, serovar E (393 aa).

The N-terminal stretch at 1 to 22 (MKKLLKSVLVFAALSSASSLQA) is a signal peptide.

This sequence belongs to the chlamydial porin (CP) (TC 1.B.2) family. As to quaternary structure, part of a disulfide cross-linked outer membrane complex (COMC) composed of the major outer membrane porin (MOMP), the small cysteine-rich protein (OmcA) and the large cysteine-rich periplasmic protein (OmcB).

It is found in the cell outer membrane. In terms of biological role, in elementary bodies (EBs, the infectious stage, which is able to survive outside the host cell) provides the structural integrity of the outer envelope through disulfide cross-links with the small cysteine-rich protein and the large cysteine-rich periplasmic protein. It has been described in publications as the Sarkosyl-insoluble COMC (Chlamydia outer membrane complex), and serves as the functional equivalent of peptidoglycan. Functionally, permits diffusion of specific solutes through the outer membrane. This is Major outer membrane porin, serovar E (ompA) from Chlamydia trachomatis.